The sequence spans 297 residues: Nitrogenase iron protein 2 (297 aa).

Position 14-21 (14-21 (GKGGIGKS)) interacts with ATP. Cysteine 102 serves as a coordination point for [4Fe-4S] cluster. Position 105 is an ADP-ribosylarginine; by dinitrogenase reductase ADP-ribosyltransferase (arginine 105). Cysteine 136 is a binding site for [4Fe-4S] cluster.

Belongs to the NifH/BchL/ChlL family. Homodimer. [4Fe-4S] cluster serves as cofactor. Post-translationally, the reversible ADP-ribosylation of Arg-105 inactivates the nitrogenase reductase and regulates nitrogenase activity.

It catalyses the reaction N2 + 8 reduced [2Fe-2S]-[ferredoxin] + 16 ATP + 16 H2O = H2 + 8 oxidized [2Fe-2S]-[ferredoxin] + 2 NH4(+) + 16 ADP + 16 phosphate + 6 H(+). Its function is as follows. The key enzymatic reactions in nitrogen fixation are catalyzed by the nitrogenase complex, which has 2 components: the iron protein and the molybdenum-iron protein. This Nostoc sp. (strain PCC 7120 / SAG 25.82 / UTEX 2576) protein is Nitrogenase iron protein 2 (nifH2).